We begin with the raw amino-acid sequence, 239 residues long: MFLEVETHCHTIASGHAYNTLEEMVAEAKNKGLKGICITDHGPEMPGSCSSLYFYNLVVVPRKIDGIMVFRGCEANIIDYEGSVDLPESALNRLDFVIASLHDVCIPPGTILDHTRALISAIKNPNILCIGHPGNPLYEIDKEAVVKTAKEHNKAIEINNASFYVREKSRENCIEILKLCKKYGVYIAMGSDAHFKTDIARCDVTRKLIEEYEFPHELIVNKSLENFLEFLRLHGKNIE.

The Zn(2+) site is built by histidine 8, histidine 10, histidine 16, histidine 41, glutamate 74, histidine 102, histidine 132, aspartate 192, and histidine 194.

It belongs to the PHP family. It depends on Zn(2+) as a cofactor.

In Caldicellulosiruptor saccharolyticus (strain ATCC 43494 / DSM 8903 / Tp8T 6331), this protein is Probable phosphatase Csac_1188.